A 291-amino-acid polypeptide reads, in one-letter code: F-box protein PP2-A12 (291 aa).

Positions 25-71 constitute an F-box domain; that stretch reads KPGLGDLPEACVAIIVENLDPVEICRFSKLNRAFRGASWADCVWESK.

The protein is F-box protein PP2-A12 (P2A12) of Arabidopsis thaliana (Mouse-ear cress).